A 758-amino-acid polypeptide reads, in one-letter code: Glucocorticoid receptor (758 aa).

Disordered regions lie at residues 1-61 (MDPG…SANG) and 349-382 (GMSSSSFPVGFSSPKARPEASGSASSAPAKPSGP). The segment at 1–386 (MDPGGLKHSK…AKPSGPTHKI (386 aa)) is modulating. Residues 26–42 (GSFSGDTGGSKSTTSTS) are compositionally biased toward low complexity. 2 NR C4-type zinc fingers span residues 387–407 (CLVCSDEASGCHYGVLTCGSC) and 432–456 (CAGRNDCIIDKIRRKNCPACRFRKC). Residues 387-461 (CLVCSDEASG…RFRKCLQAGM (75 aa)) constitute a DNA-binding region (nuclear receptor). A hinge region spans residues 462 to 498 (NLEARKNKKLIRLKGQQTTMEPNPPPPDERACALIPK). Positions 499 to 733 (SMPQLVPTML…FPEMLAEIIS (235 aa)) constitute an NR LBD domain.

The protein belongs to the nuclear hormone receptor family. NR3 subfamily. As to quaternary structure, heteromultimeric cytoplasmic complex with HSP90AA1, HSPA1A/HSPA1B, and FKBP5 or another immunophilin such as PPID, STIP1, or the immunophilin homolog PPP5C. Upon ligand binding FKBP5 dissociates from the complex and FKBP4 takes its place, thereby linking the complex to dynein and mediating transport to the nucleus, where the complex dissociates. Directly interacts with UNC45A. Binds to DNA as a homodimer, and as heterodimer with NR3C2 or the retinoid X receptor. Binds STAT5A and STAT5B homodimers and heterodimers. Interacts with NRIP1, POU2F1, POU2F2 and TRIM28. Interacts with several coactivator complexes, including the SMARCA4 complex, CREBBP/EP300, TADA2L (Ada complex) and p160 coactivators such as NCOA2 and NCOA6. Interaction with BAG1 inhibits transactivation. Interacts with HEXIM1, PELP1 and TGFB1I1. Interacts with NCOA1, NCOA3, SMARCA4, SMARCC1, SMARCD1, and SMARCE1. Post-translationally, phosphorylated in the absence of hormone; becomes hyperphosphorylated in the presence of glucocorticoids. May be dephosphorylated by PPP5C, attenuates NR3C1 action. As to expression, isoform 1 is expressed in all tissues tested including liver, gills, intestine, skeletal muscle, kidney, heart, spleen, stomach, brain, pituitary, ovary, testis, skin and bladder. Isoform 2 is found only in testis.

Its subcellular location is the cytoplasm. The protein localises to the nucleus. The protein resides in the mitochondrion. It localises to the cytoskeleton. It is found in the spindle. Its subcellular location is the microtubule organizing center. The protein localises to the centrosome. Functionally, receptor for glucocorticoids (GC). Has a dual mode of action: as a transcription factor that binds to glucocorticoid response elements (GRE), both for nuclear and mitochondrial DNA, and as a modulator of other transcription factors. Affects inflammatory responses, cellular proliferation and differentiation in target tissues. Involved in chromatin remodeling. Plays a role in rapid mRNA degradation by binding to the 5' UTR of target mRNAs and interacting with PNRC2 in a ligand-dependent manner which recruits the RNA helicase UPF1 and the mRNA-decapping enzyme DCP1A, leading to RNA decay. Could act as a coactivator for STAT5-dependent transcription upon growth hormone (GH) stimulation and could reveal an essential role of hepatic GR in the control of body growth. Mediates glucocorticoid-induced apoptosis. Promotes accurate chromosome segregation during mitosis. May act as a tumor suppressor. May play a negative role in adipogenesis through the regulation of lipolytic and antilipogenic gene expression. The chain is Glucocorticoid receptor (nr3c1) from Oncorhynchus mykiss (Rainbow trout).